The primary structure comprises 315 residues: Malate dehydrogenase (315 aa).

NAD(+)-binding positions include 11–16 and Asp35; that span reads GAGHVG. Residues Arg84 and Arg90 each contribute to the substrate site. NAD(+)-binding positions include Asn97 and 120–122; that span reads VTN. Asn122 and Arg153 together coordinate substrate. His177 functions as the Proton acceptor in the catalytic mechanism.

It belongs to the LDH/MDH superfamily. MDH type 3 family.

It carries out the reaction (S)-malate + NAD(+) = oxaloacetate + NADH + H(+). Catalyzes the reversible oxidation of malate to oxaloacetate. This chain is Malate dehydrogenase, found in Thermosulfidibacter takaii (strain DSM 17441 / JCM 13301 / NBRC 103674 / ABI70S6).